The sequence spans 1062 residues: Carbamoyl phosphate synthase large chain (1062 aa).

The tract at residues 1–401 (MPKRTDIHKI…AMQKAVQSLE (401 aa)) is carboxyphosphate synthetic domain. ATP contacts are provided by Arg129, Arg169, Gly175, Gly176, Lys208, Ile210, Glu215, Gly241, Ile242, His243, Gln284, and Glu298. Residues 133-327 (KELCQKLGEP…IAKMAAKIAI (195 aa)) form the ATP-grasp 1 domain. Positions 284, 298, and 300 each coordinate Mg(2+). Mn(2+) contacts are provided by Gln284, Glu298, and Asn300. Residues 402 to 546 (IDEKDLYSAK…YSTYDGENES (145 aa)) are oligomerization domain. The interval 547 to 929 (RKSGKKSVIV…ALYKAFAGAK (383 aa)) is carbamoyl phosphate synthetic domain. In terms of domain architecture, ATP-grasp 2 spans 671-861 (DQIIKSLHLH…MAQVATRVIM (191 aa)). Positions 707, 746, 748, 752, 777, 778, 779, 780, 820, and 832 each coordinate ATP. Residues Gln820, Glu832, and Asn834 each coordinate Mg(2+). Mn(2+) contacts are provided by Gln820, Glu832, and Asn834. The MGS-like domain occupies 930–1062 (MQLPENGNVL…NRSFATDALK (133 aa)). Positions 930 to 1062 (MQLPENGNVL…NRSFATDALK (133 aa)) are allosteric domain.

Belongs to the CarB family. Composed of two chains; the small (or glutamine) chain promotes the hydrolysis of glutamine to ammonia, which is used by the large (or ammonia) chain to synthesize carbamoyl phosphate. Tetramer of heterodimers (alpha,beta)4. It depends on Mg(2+) as a cofactor. Mn(2+) serves as cofactor.

It carries out the reaction hydrogencarbonate + L-glutamine + 2 ATP + H2O = carbamoyl phosphate + L-glutamate + 2 ADP + phosphate + 2 H(+). It catalyses the reaction hydrogencarbonate + NH4(+) + 2 ATP = carbamoyl phosphate + 2 ADP + phosphate + 2 H(+). It participates in amino-acid biosynthesis; L-arginine biosynthesis; carbamoyl phosphate from bicarbonate: step 1/1. The protein operates within pyrimidine metabolism; UMP biosynthesis via de novo pathway; (S)-dihydroorotate from bicarbonate: step 1/3. Large subunit of the glutamine-dependent carbamoyl phosphate synthetase (CPSase). CPSase catalyzes the formation of carbamoyl phosphate from the ammonia moiety of glutamine, carbonate, and phosphate donated by ATP, constituting the first step of 2 biosynthetic pathways, one leading to arginine and/or urea and the other to pyrimidine nucleotides. The large subunit (synthetase) binds the substrates ammonia (free or transferred from glutamine from the small subunit), hydrogencarbonate and ATP and carries out an ATP-coupled ligase reaction, activating hydrogencarbonate by forming carboxy phosphate which reacts with ammonia to form carbamoyl phosphate. The chain is Carbamoyl phosphate synthase large chain from Lactobacillus helveticus (strain DPC 4571).